A 579-amino-acid chain; its full sequence is Laccase (579 aa).

Positions 1–31 (MTDWSRRRFLQTGAALGIAGTLPQTTTEVSA) form a signal peptide, tat-type signal. Residues 82–214 (WGFDGSYPGP…AGLLGLYSIT (133 aa)) form the Plastocyanin-like 1 domain. Cu cation contacts are provided by His145, His147, His192, and His194. The tract at residues 372–401 (VSDPSTPPEDASADPTSLSLPTPASYDESD) is disordered. The 108-residue stretch at 423–530 (LNGHVFGDED…NKMMIPFVVE (108 aa)) folds into the Plastocyanin-like 2 domain. Asn449 is a glycosylation site (N-linked (GlcNAc...) asparagine). Residues His455, His458, His460, His512, Cys513, His514, His518, and Met523 each coordinate Cu cation. A glycan (N-linked (GlcNAc...) asparagine) is linked at Asn557.

It belongs to the multicopper oxidase family. Cu(2+) serves as cofactor. Exported by the Tat system. Post-translationally, glycosylated.

It localises to the secreted. It catalyses the reaction 4 hydroquinone + O2 = 4 benzosemiquinone + 2 H2O. With respect to regulation, inhibited by 1 mM NaN(3), 10 mM thiourea, 10 mM 1,10-phenanthroline, 0.1 mM DL-dithiothreitol (DTT) and 1 mM L-cysteine. The inhibition by DTT and L-cysteine is likely caused by reduction of the oxidized substrate and not by inhibition of the enzyme. Its function is as follows. Catalyzes the oxidation of a wide variety of organic substrates, including bilirubin, syringaldazine (SGZ), 2,2'-azino-di-(3-ethylbenzothiazoline)-6-sulfonic acid (ABTS) and dimethoxyphenol (DMP). No oxidation of Fe(2+) or guaiacol. This Haloferax volcanii (strain ATCC 29605 / DSM 3757 / JCM 8879 / NBRC 14742 / NCIMB 2012 / VKM B-1768 / DS2) (Halobacterium volcanii) protein is Laccase (lccA).